Consider the following 380-residue polypeptide: PqqA peptide cyclase (380 aa).

In terms of domain architecture, Radical SAM core spans 8–223; that stretch reads VNPPLWLLAE…VADYRQKMAA (216 aa). Residues cysteine 22, cysteine 26, and cysteine 29 each coordinate [4Fe-4S] cluster.

It belongs to the radical SAM superfamily. PqqE family. Interacts with PqqD. The interaction is necessary for activity of PqqE. [4Fe-4S] cluster is required as a cofactor.

It carries out the reaction [PQQ precursor protein] + S-adenosyl-L-methionine = E-Y cross-linked-[PQQ precursor protein] + 5'-deoxyadenosine + L-methionine + H(+). It functions in the pathway cofactor biosynthesis; pyrroloquinoline quinone biosynthesis. In terms of biological role, catalyzes the cross-linking of a glutamate residue and a tyrosine residue in the PqqA protein as part of the biosynthesis of pyrroloquinoline quinone (PQQ). The sequence is that of PqqA peptide cyclase from Klebsiella pneumoniae (strain 342).